A 1029-amino-acid polypeptide reads, in one-letter code: 2-oxoglutarate dehydrogenase, mitochondrial (1029 aa).

Thiamine diphosphate contacts are provided by arginine 317, aspartate 415, asparagine 448, isoleucine 450, and glutamine 676. 3 residues coordinate Mg(2+): aspartate 415, asparagine 448, and isoleucine 450.

Belongs to the alpha-ketoglutarate dehydrogenase family. In terms of assembly, homodimer. Component of the 2-oxoglutarate dehydrogenase complex. Requires thiamine diphosphate as cofactor. The cofactor is Mg(2+).

The protein localises to the mitochondrion matrix. It catalyses the reaction N(6)-[(R)-lipoyl]-L-lysyl-[protein] + 2-oxoglutarate + H(+) = N(6)-[(R)-S(8)-succinyldihydrolipoyl]-L-lysyl-[protein] + CO2. Its function is as follows. The 2-oxoglutarate dehydrogenase complex catalyzes the overall conversion of 2-oxoglutarate to succinyl-CoA and CO(2). It contains multiple copies of three enzymatic components: 2-oxoglutarate dehydrogenase (E1), dihydrolipoamide succinyltransferase (E2) and lipoamide dehydrogenase (E3). This Caenorhabditis elegans protein is 2-oxoglutarate dehydrogenase, mitochondrial (ogdh-1).